The following is a 453-amino-acid chain: Ribulose bisphosphate carboxylase large chain (453 aa).

Residues 1-2 (MS) constitute a propeptide that is removed on maturation. Pro3 carries the N-acetylproline modification. Residue Lys14 is modified to N6,N6,N6-trimethyllysine. Residues Asn123 and Thr173 each coordinate substrate. The active-site Proton acceptor is the Lys175. Lys177 contributes to the substrate binding site. Lys201, Asp203, and Glu204 together coordinate Mg(2+). The residue at position 201 (Lys201) is an N6-carboxylysine. The Proton acceptor role is filled by His294. Arg295, His327, and Ser379 together coordinate substrate.

The protein belongs to the RuBisCO large chain family. Type I subfamily. In terms of assembly, heterohexadecamer of 8 large chains and 8 small chains; disulfide-linked. The disulfide link is formed within the large subunit homodimers. Requires Mg(2+) as cofactor. In terms of processing, the disulfide bond which can form in the large chain dimeric partners within the hexadecamer appears to be associated with oxidative stress and protein turnover.

The protein localises to the plastid. It is found in the chloroplast. The enzyme catalyses 2 (2R)-3-phosphoglycerate + 2 H(+) = D-ribulose 1,5-bisphosphate + CO2 + H2O. It catalyses the reaction D-ribulose 1,5-bisphosphate + O2 = 2-phosphoglycolate + (2R)-3-phosphoglycerate + 2 H(+). Its function is as follows. RuBisCO catalyzes two reactions: the carboxylation of D-ribulose 1,5-bisphosphate, the primary event in carbon dioxide fixation, as well as the oxidative fragmentation of the pentose substrate in the photorespiration process. Both reactions occur simultaneously and in competition at the same active site. This Galium aparine (Catchweed bedstraw) protein is Ribulose bisphosphate carboxylase large chain.